A 143-amino-acid chain; its full sequence is Transcriptional regulator MraZ (143 aa).

SpoVT-AbrB domains lie at 5 to 47 (THSP…PIRE) and 76 to 119 (ASNE…DAQT).

It belongs to the MraZ family. Forms oligomers.

The protein resides in the cytoplasm. It localises to the nucleoid. The sequence is that of Transcriptional regulator MraZ from Thermobifida fusca (strain YX).